The primary structure comprises 511 residues: Inositol-3-phosphate synthase isozyme 1 (511 aa).

NAD(+) is bound by residues Gly-71, Gly-72, Asn-73, Asn-74, Asp-144, Ile-181, Gln-191, Arg-194, Thr-231, Ala-232, Asn-233, Thr-234, Gly-282, Ser-283, Asp-307, Ser-310, Asn-341, Asn-342, Asp-343, Lys-356, Ala-394, Asp-395, Asp-423, and Ser-424.

This sequence belongs to the myo-inositol 1-phosphate synthase family. As to quaternary structure, homotrimer or homotetramer. Interacts with ATXR5 and ATXR6. NAD(+) is required as a cofactor. In terms of tissue distribution, expressed in siliques, leaves, roots, seed endosperm, but not in embryos. Highest expression in leaves, but restricted to vascular tissue in older leaves.

The protein localises to the cytoplasm. It is found in the cytosol. The protein resides in the nucleus. It catalyses the reaction D-glucose 6-phosphate = 1D-myo-inositol 3-phosphate. It functions in the pathway polyol metabolism; myo-inositol biosynthesis; myo-inositol from D-glucose 6-phosphate: step 1/2. Functionally, key enzyme in myo-inositol biosynthesis pathway that catalyzes the conversion of glucose 6-phosphate to 1-myo-inositol 1-phosphate in a NAD-dependent manner. Catalyzes the majority of myo-inositol synthesis required for plant growth and development. Acts as a repressor of programmed cell death and protects plant cells against cell death under high light intensity or long days. Controls its own transcription by inhibiting ATXR6 activity. Reduces the deposition of inhibitory histone marks on its own promoter. This is Inositol-3-phosphate synthase isozyme 1 (IPS1) from Arabidopsis thaliana (Mouse-ear cress).